Consider the following 388-residue polypeptide: Processive diacylglycerol beta-glucosyltransferase (388 aa).

This sequence belongs to the glycosyltransferase 28 family. UgtP subfamily.

Its subcellular location is the cell membrane. It carries out the reaction a 1,2-diacyl-3-O-(beta-D-glucopyranosyl)-sn-glycerol + UDP-alpha-D-glucose = a 1,2-diacyl-3-O-(beta-D-Glc-(1-&gt;6)-beta-D-Glc)-sn-glycerol + UDP + H(+). The catalysed reaction is a 1,2-diacyl-3-O-(beta-D-Glc-(1-&gt;6)-beta-D-Glc)-sn-glycerol + UDP-alpha-D-glucose = a 1,2-diacyl-3-O-(beta-D-Glc-(1-&gt;6)-beta-D-Glc-(1-&gt;6)-beta-D-Glc)-sn-glycerol + UDP + H(+). The enzyme catalyses a 1,2-diacyl-sn-glycerol + UDP-alpha-D-glucose = a 1,2-diacyl-3-O-(beta-D-glucopyranosyl)-sn-glycerol + UDP + H(+). It participates in glycolipid metabolism; diglucosyl-diacylglycerol biosynthesis. Functionally, processive glucosyltransferase involved in the biosynthesis of both the bilayer- and non-bilayer-forming membrane glucolipids. Is able to successively transfer up to three glucosyl residues to diacylglycerol (DAG), thereby catalyzing the formation of beta-monoglucosyl-DAG (3-O-(beta-D-glucopyranosyl)-1,2-diacyl-sn-glycerol), beta-diglucosyl-DAG (3-O-(beta-D-glucopyranosyl-beta-(1-&gt;6)-D-glucopyranosyl)-1,2-diacyl-sn-glycerol) and beta-triglucosyl-DAG (3-O-(beta-D-glucopyranosyl-beta-(1-&gt;6)-D-glucopyranosyl-beta-(1-&gt;6)-D-glucopyranosyl)-1,2-diacyl-sn-glycerol). Beta-diglucosyl-DAG is the predominant glycolipid found in Bacillales and is also used as a membrane anchor for lipoteichoic acid (LTA). The protein is Processive diacylglycerol beta-glucosyltransferase of Bacillus anthracis (strain A0248).